Reading from the N-terminus, the 117-residue chain is Large ribosomal subunit protein bL20c (117 aa).

Belongs to the bacterial ribosomal protein bL20 family.

It is found in the plastid. It localises to the chloroplast. Binds directly to 23S ribosomal RNA and is necessary for the in vitro assembly process of the 50S ribosomal subunit. It is not involved in the protein synthesizing functions of that subunit. The polypeptide is Large ribosomal subunit protein bL20c (Populus alba (White poplar)).